A 498-amino-acid chain; its full sequence is MSRNGAKYRDLRDFIARLEAEGELRRIGASVDPNLEITEICDRTLKSEGPALLFEHPKGSAVPLLGNLFGTPRRVALGMGEVSVGALRQVGVLLASLKEPEPPKGMRDAFEKVPLYRQVLHMAPKEVRNAPCQQEVLRGSDIDLGRYPIQTCWPGDAGPLITWPLVITRGPYKARQNLGIYRQQVIGRNKTIMRWLAHRGGALDFRDWQEARPGEPFPVAVALGADPATMLGAVTPVPDTLSEYGFAGLLRGARTEVTPCILSDLQVPASAEIVLEGFLYPGETAPEGPFGDHTGYYNEVESFPVFTIECITQRHSPIYHSTYTGRPPDEPAVLGVALNEVFVPILQKQFPEVVDFYLPPEGCSYRLAVVSMKKQYAGHAKRVMFGVWSFLRQFMYTKFVIVVDDDVDARNWKDVVWAMTTRMDPARDLTLIENTPIDYLDFASPVSGLGSKVGFDATHKWPGETNREWGRPITMDAAVRRRVDEIWDSLGIFAGSRG.

Asn-177 is a Mn(2+) binding site. Prenylated FMN-binding positions include 180–182, 194–196, and 199–200; these read IYR, RWL, and RG. A Mn(2+)-binding site is contributed by Glu-243. Residue Asp-292 is the Proton donor of the active site.

This sequence belongs to the UbiD family. In terms of assembly, homohexamer. Prenylated FMN is required as a cofactor. It depends on Mn(2+) as a cofactor.

The protein localises to the cell membrane. It carries out the reaction a 4-hydroxy-3-(all-trans-polyprenyl)benzoate + H(+) = a 2-(all-trans-polyprenyl)phenol + CO2. Its pathway is cofactor biosynthesis; ubiquinone biosynthesis. Its function is as follows. Catalyzes the decarboxylation of 3-octaprenyl-4-hydroxy benzoate to 2-octaprenylphenol, an intermediate step in ubiquinone biosynthesis. This is 3-octaprenyl-4-hydroxybenzoate carboxy-lyase from Methylococcus capsulatus (strain ATCC 33009 / NCIMB 11132 / Bath).